The chain runs to 471 residues: Tryptophanase (471 aa).

Residues K5, K115, and K156 each carry the N6-acetyllysine modification. K270 is subject to N6-(pyridoxal phosphate)lysine. K450 is modified (N6-acetyllysine).

This sequence belongs to the beta-eliminating lyase family. In terms of assembly, homotetramer. It depends on pyridoxal 5'-phosphate as a cofactor.

It catalyses the reaction L-tryptophan + H2O = indole + pyruvate + NH4(+). It functions in the pathway amino-acid degradation; L-tryptophan degradation via pyruvate pathway; indole and pyruvate from L-tryptophan: step 1/1. This Shigella boydii serotype 18 (strain CDC 3083-94 / BS512) protein is Tryptophanase.